The following is a 591-amino-acid chain: DNA ligase (591 aa).

NAD(+) is bound by residues 38-42 (DEKYD), 87-88 (SL), and Glu119. Lys121 functions as the N6-AMP-lysine intermediate in the catalytic mechanism. Residues Arg142, Glu181, Lys298, and Lys322 each coordinate NAD(+). Residues Cys415, Cys418, Cys433, and Cys439 each contribute to the Zn(2+) site.

This sequence belongs to the NAD-dependent DNA ligase family. LigA subfamily. Mg(2+) is required as a cofactor. It depends on Mn(2+) as a cofactor.

It carries out the reaction NAD(+) + (deoxyribonucleotide)n-3'-hydroxyl + 5'-phospho-(deoxyribonucleotide)m = (deoxyribonucleotide)n+m + AMP + beta-nicotinamide D-nucleotide.. In terms of biological role, DNA ligase that catalyzes the formation of phosphodiester linkages between 5'-phosphoryl and 3'-hydroxyl groups in double-stranded DNA using NAD as a coenzyme and as the energy source for the reaction. It is essential for DNA replication and repair of damaged DNA. The protein is DNA ligase of Wigglesworthia glossinidia brevipalpis.